The following is a 250-amino-acid chain: Probable ABC transporter permease protein BAB2_1148 (250 aa).

The next 6 helical transmembrane spans lie at 12 to 32, 63 to 83, 94 to 114, 122 to 142, 172 to 192, and 211 to 231; these read LLSFAVGIGGWYLLTATGAVV, VLSGFVLGVALAIPVGFLMGW, WVQFFRMIPPLAVIPLAIVTL, IFVIFLASFLSSVVATYQGVI, VPFILVGVRIGLGSAWATVVA, and LYYDLPTIFVSLVTIGILGLF. The 181-residue stretch at 56–236 folds into the ABC transmembrane type-1 domain; that stretch reads IFASLRRVLS…ILGLFMDRLL (181 aa).

Belongs to the binding-protein-dependent transport system permease family. In terms of assembly, the complex is composed of two ATP-binding proteins (BAB2_1147), two transmembrane proteins (BAB2_1148) and a solute-binding protein (BAB2_1146).

It localises to the cell inner membrane. Functionally, probably part of an ABC transporter complex. Probably responsible for the translocation of the substrate across the membrane. In Brucella abortus (strain 2308), this protein is Probable ABC transporter permease protein BAB2_1148.